Reading from the N-terminus, the 190-residue chain is MQKKFEDCVKTMLEIIGENPNREGLIKTPNRVFKAYEFLTSGYTQNVKEILNDALFESSNNEMVLVRDIEFYSLCEHHLLPFFGRAHVAYIPNKKVVGLSKIPRLVEVFARRLQIQEQLTEQIAQALMENADAKGVGVIIEARHMCVEMRGVQKANSTTTTSALRGIFLKNEKIREEFFSLINSAKQVRF.

Zn(2+)-binding residues include Cys-75, His-78, and Cys-146.

Belongs to the GTP cyclohydrolase I family. In terms of assembly, toroid-shaped homodecamer, composed of two pentamers of five dimers.

The catalysed reaction is GTP + H2O = 7,8-dihydroneopterin 3'-triphosphate + formate + H(+). The protein operates within cofactor biosynthesis; 7,8-dihydroneopterin triphosphate biosynthesis; 7,8-dihydroneopterin triphosphate from GTP: step 1/1. The protein is GTP cyclohydrolase 1 of Campylobacter jejuni subsp. doylei (strain ATCC BAA-1458 / RM4099 / 269.97).